Consider the following 492-residue polypeptide: Peptidyl-prolyl cis-trans isomerase-like 4 (492 aa).

A PPIase cyclophilin-type domain is found at 1–161; sequence MAVLLETTLG…QDIRINHTVI (161 aa). The disordered stretch occupies residues 167–188; that stretch reads DDPPDLLIPDRSPEPTKEQLDS. Over residues 177 to 187 the composition is skewed to basic and acidic residues; it reads RSPEPTKEQLD. The residue at position 178 (Ser-178) is a Phosphoserine. Thr-182 carries the post-translational modification Phosphothreonine. Glycyl lysine isopeptide (Lys-Gly) (interchain with G-Cter in SUMO2) cross-links involve residues Lys-201, Lys-212, and Lys-218. The RRM domain maps to 240–318; sequence NVLFVCKLNP…RRIHVDFSQS (79 aa). Glycyl lysine isopeptide (Lys-Gly) (interchain with G-Cter in SUMO2) cross-links involve residues Lys-321 and Lys-362. Disordered regions lie at residues 368-409 and 423-492; these read DEQG…NPNQ and EESC…SKYR. Residues 377–390 show a composition bias toward basic residues; sequence SHSHTSKKHKKKTR. The residue at position 393 (Ser-393) is a Phosphoserine. Lys-405 is covalently cross-linked (Glycyl lysine isopeptide (Lys-Gly) (interchain with G-Cter in SUMO2)). A compositionally biased stretch (basic and acidic residues) spans 426–436; it reads CWEKQKNEKRD. A Glycyl lysine isopeptide (Lys-Gly) (interchain with G-Cter in SUMO2) cross-link involves residue Lys-460. Ser-471 is modified (phosphoserine). Basic residues predominate over residues 473-485; sequence KRDRSRSPKKSKA.

The protein belongs to the cyclophilin-type PPIase family. PPIL4 subfamily.

It is found in the nucleus. It carries out the reaction [protein]-peptidylproline (omega=180) = [protein]-peptidylproline (omega=0). Functionally, PPIases accelerate the folding of proteins. It catalyzes the cis-trans isomerization of proline imidic peptide bonds in oligopeptides. In Mus musculus (Mouse), this protein is Peptidyl-prolyl cis-trans isomerase-like 4 (Ppil4).